The following is a 62-amino-acid chain: Arabinogalactan protein 40 (62 aa).

The first 22 residues, 1–22 (MEMKNIFVALFISAVLVSSVSA), serve as a signal peptide directing secretion. 4-hydroxyproline is present on residues Pro-28, Pro-30, and Pro-32. O-linked (Ara...) hydroxyproline glycosylation is found at Pro-28, Pro-30, and Pro-32. The GPI-anchor amidated serine moiety is linked to residue Ser-35. Residues 36-62 (SASTVAFPVVGSIVAASLSAFLALLLQ) constitute a propeptide, removed in mature form.

Belongs to the AG-peptide AGP family. Contains 4-hydroxyproline; hydroxylated on Pro-28, Pro-30 and Pro-32. Post-translationally, O-glycosylated on hydroxyprolines; noncontiguous hydroxylproline residues are glycosylated with arabinogalactan.

It localises to the cell membrane. Proteoglycan that seems to be implicated in diverse developmental roles such as differentiation, cell-cell recognition, embryogenesis and programmed cell death. This chain is Arabinogalactan protein 40, found in Arabidopsis thaliana (Mouse-ear cress).